Here is a 286-residue protein sequence, read N- to C-terminus: ATP synthase gamma chain (286 aa).

It belongs to the ATPase gamma chain family. As to quaternary structure, F-type ATPases have 2 components, CF(1) - the catalytic core - and CF(0) - the membrane proton channel. CF(1) has five subunits: alpha(3), beta(3), gamma(1), delta(1), epsilon(1). CF(0) has three main subunits: a, b and c.

The protein localises to the cell inner membrane. Its function is as follows. Produces ATP from ADP in the presence of a proton gradient across the membrane. The gamma chain is believed to be important in regulating ATPase activity and the flow of protons through the CF(0) complex. This is ATP synthase gamma chain from Pseudoalteromonas translucida (strain TAC 125).